A 160-amino-acid polypeptide reads, in one-letter code: Cytochrome b6-f complex subunit 4 (160 aa).

3 helical membrane-spanning segments follow: residues 36–56, 95–115, and 127–147; these read LLYTFPVVILGTITCCIGLAL, LLGVLSMASVPLGLIFVPFIE, and PIATTVFLVGTVVTIWLGIGA.

It belongs to the cytochrome b family. PetD subfamily. In terms of assembly, the 4 large subunits of the cytochrome b6-f complex are cytochrome b6, subunit IV (17 kDa polypeptide, petD), cytochrome f and the Rieske protein, while the 4 small subunits are petG, petL, petM and petN. The complex functions as a dimer.

It localises to the plastid. The protein resides in the chloroplast thylakoid membrane. Functionally, component of the cytochrome b6-f complex, which mediates electron transfer between photosystem II (PSII) and photosystem I (PSI), cyclic electron flow around PSI, and state transitions. The polypeptide is Cytochrome b6-f complex subunit 4 (Cyanidioschyzon merolae (strain NIES-3377 / 10D) (Unicellular red alga)).